The following is a 1358-amino-acid chain: DNA-directed RNA polymerase subunit beta (1358 aa).

This sequence belongs to the RNA polymerase beta chain family. The RNAP catalytic core consists of 2 alpha, 1 beta, 1 beta' and 1 omega subunit. When a sigma factor is associated with the core the holoenzyme is formed, which can initiate transcription.

The enzyme catalyses RNA(n) + a ribonucleoside 5'-triphosphate = RNA(n+1) + diphosphate. In terms of biological role, DNA-dependent RNA polymerase catalyzes the transcription of DNA into RNA using the four ribonucleoside triphosphates as substrates. In Neorickettsia sennetsu (strain ATCC VR-367 / Miyayama) (Ehrlichia sennetsu), this protein is DNA-directed RNA polymerase subunit beta.